Consider the following 552-residue polypeptide: MYCERFICILRILGTTLFGVSLLLGITAAYIVGYQFIQTDNYYFSFGLYGAILASHLIIQSLFAYLEHRKMKRSLETPIKLNKTVALCIAAYQEDPDYLRKCLLSVKRLTYPGIKVVMVIDGNSEDDVYMMDIFTEIMGRDKSATYIWSNNFHDKGPGETEESHRESMQHVSQLVLSNKSVCIMQKWGGKREVMYTAFKALGEAWNYVQVCDSDTMLDPASSVEMVKVLEEDPMVGGVGGDVQILNKYDSWISFLSSVRYWMAFNIERACQSYFGCVQCISGPLGMYRNSLLHEFVEDWYNQEFMGSQCSFGDDRHLTNRVLSLGYATKYTARSKCLTETPIEYLRWLNQQTRWSKSYFREWLYNAMWFHKHHLWMTYEAVITGFFPFFLIATVIQLFYRGKIWNILLFLLTVQLVGLIKSSFASFLRGNIVMVFMSLYSVLYMSSLLPAKMFAIATINKAGWGTSGRKTIVVNFIGLIPVSIWFTILLGRVIFTIYKESKKPFSESKTTVLVIGTILYACYWVLLLTLYLVLITKCGRRKKEQHYDMVLDV.

Topologically, residues 1 to 11 (MYCERFICILR) are cytoplasmic. A helical transmembrane segment spans residues 12 to 32 (ILGTTLFGVSLLLGITAAYIV). At 33–45 (GYQFIQTDNYYFS) the chain is on the extracellular side. A helical membrane pass occupies residues 46–66 (FGLYGAILASHLIIQSLFAYL). Residues 67 to 374 (EHRKMKRSLE…NAMWFHKHHL (308 aa)) lie on the Cytoplasmic side of the membrane. The chain crosses the membrane as a helical span at residues 375–395 (WMTYEAVITGFFPFFLIATVI). Residues 396–402 (QLFYRGK) lie on the Extracellular side of the membrane. The chain crosses the membrane as a helical span at residues 403–423 (IWNILLFLLTVQLVGLIKSSF). At 424-429 (ASFLRG) the chain is on the cytoplasmic side. The helical transmembrane segment at 430–450 (NIVMVFMSLYSVLYMSSLLPA) threads the bilayer. Over 451 to 475 (KMFAIATINKAGWGTSGRKTIVVNF) the chain is Extracellular. Residues 476–496 (IGLIPVSIWFTILLGRVIFTI) traverse the membrane as a helical segment. The Cytoplasmic segment spans residues 497 to 510 (YKESKKPFSESKTT). A helical transmembrane segment spans residues 511–531 (VLVIGTILYACYWVLLLTLYL). The Extracellular segment spans residues 532 to 552 (VLITKCGRRKKEQHYDMVLDV).

It belongs to the NodC/HAS family. In terms of assembly, homodimer; dimerization promotes enzymatic activity. Mg(2+) serves as cofactor.

The protein resides in the cell membrane. The protein localises to the endoplasmic reticulum membrane. Its subcellular location is the vesicle. It is found in the golgi apparatus membrane. It localises to the lysosome. It carries out the reaction [hyaluronan](n) + UDP-N-acetyl-alpha-D-glucosamine = N-acetyl-beta-D-glucosaminyl-(1-&gt;4)-[hyaluronan](n) + UDP + H(+). The catalysed reaction is N-acetyl-beta-D-glucosaminyl-(1-&gt;4)-[hyaluronan](n) + UDP-alpha-D-glucuronate = [hyaluronan](n+1) + UDP + H(+). The protein operates within glycan biosynthesis; hyaluronan biosynthesis. Functionally, catalyzes the addition of GlcNAc or GlcUA monosaccharides to the nascent hyaluronan polymer. Therefore, it is essential to hyaluronan synthesis a major component of most extracellular matrices that has a structural role in tissues architectures and regulates cell adhesion, migration and differentiation. This is one of three isoenzymes responsible for cellular hyaluronan synthesis and it is particularly responsible for the synthesis of high molecular mass hyaluronan. This Gallus gallus (Chicken) protein is Hyaluronan synthase 2 (HAS2).